Here is a 172-residue protein sequence, read N- to C-terminus: 3-hydroxydecanoyl-[acyl-carrier-protein] dehydratase (172 aa).

His71 is a catalytic residue.

Belongs to the thioester dehydratase family. FabA subfamily. As to quaternary structure, homodimer.

It is found in the cytoplasm. It carries out the reaction a (3R)-hydroxyacyl-[ACP] = a (2E)-enoyl-[ACP] + H2O. It catalyses the reaction (3R)-hydroxydecanoyl-[ACP] = (2E)-decenoyl-[ACP] + H2O. The catalysed reaction is (2E)-decenoyl-[ACP] = (3Z)-decenoyl-[ACP]. The protein operates within lipid metabolism; fatty acid biosynthesis. In terms of biological role, necessary for the introduction of cis unsaturation into fatty acids. Catalyzes the dehydration of (3R)-3-hydroxydecanoyl-ACP to E-(2)-decenoyl-ACP and then its isomerization to Z-(3)-decenoyl-ACP. Can catalyze the dehydratase reaction for beta-hydroxyacyl-ACPs with saturated chain lengths up to 16:0, being most active on intermediate chain length. The sequence is that of 3-hydroxydecanoyl-[acyl-carrier-protein] dehydratase from Proteus mirabilis (strain HI4320).